The chain runs to 2179 residues: Genome polyprotein (2179 aa).

Residues 763-765 carry the Cell attachment site motif; sequence RGD. Residues 786–881 form the LRAT domain; sequence LAYLDRGFYK…IFGSHSLSQH (96 aa). H796 (for protein 2A H-NC) is an active-site residue. C865 acts as the For protein 2A H-NC; Acyl-thioester intermediate in catalysis. Residues 1156–1317 form the SF3 helicase domain; it reads FQELARIPNR…KHYSKSGKLN (162 aa). 1184–1191 lines the ATP pocket; the sequence is GEPGQGKS. An O-(5'-phospho-RNA)-tyrosine modification is found at Y1493. The 191-residue stretch at 1517–1707 folds into the Peptidase C3 domain; it reads APYDGQLEHI…IPFNFLKNDM (191 aa). Catalysis depends on for protease 3C activity residues H1557, D1595, and C1669. C1896 (acyl-thioester intermediate) is an active-site residue. In terms of domain architecture, RdRp catalytic spans 1944–2058; it reads DYNYEMDYSQ…SLDKEIEPER (115 aa). D1950 and D2044 together coordinate Mg(2+).

Belongs to the picornaviruses polyprotein family. As to quaternary structure, interacts with capsid protein VP1 and capsid protein VP3 to form heterotrimeric protomers. Five protomers subsequently associate to form pentamers which serve as building blocks for the capsid. In terms of assembly, interacts with capsid protein VP0, and capsid protein VP3 to form heterotrimeric protomers. Five protomers subsequently associate to form pentamers which serve as building blocks for the capsid. Interacts with capsid protein VP0 and capsid protein VP1 to form heterotrimeric protomers. Five protomers subsequently associate to form pentamers which serve as building blocks for the capsid. As to quaternary structure, homohexamer; forms a hexameric ring structure with 6-fold symmetry characteristic of AAA+ ATPases. In terms of assembly, homodimer. Interacts with host ACBD3. Interacts with RNA-directed RNA polymerase. As to quaternary structure, interacts with Viral protein genome-linked. Mg(2+) serves as cofactor. In terms of processing, VPg is uridylylated by the polymerase and is covalently linked to the 5'-end of genomic RNA. This uridylylated form acts as a nucleotide-peptide primer for the polymerase. Post-translationally, specific enzymatic cleavages yield mature proteins. All cleavages are catalyzed by P3C.

It localises to the virion. The protein resides in the host cytoplasm. The protein localises to the host nucleus. It is found in the host nucleolus. Its subcellular location is the host cytoplasmic vesicle membrane. It carries out the reaction RNA(n) + a ribonucleoside 5'-triphosphate = RNA(n+1) + diphosphate. It catalyses the reaction a ribonucleoside 5'-triphosphate + H2O = a ribonucleoside 5'-diphosphate + phosphate + H(+). The catalysed reaction is Selective cleavage of Gln-|-Gly bond in the poliovirus polyprotein. In other picornavirus reactions Glu may be substituted for Gln, and Ser or Thr for Gly.. Forms an icosahedral capsid of pseudo T=3 symmetry together with capsid proteins VP1 and VP3. The capsid is 300 Angstroms in diameter, composed of 60 copies of each capsid protein and enclosing the viral positive strand RNA genome. Capsid proteins interact with host alpha-V/beta-3 integrin heterodimer to provide virion attachment target cell. This attachment induces virion internalization predominantly through clathrin-mediated endocytosis. Binds packaging signals present in the viral RNA. Functionally, forms an icosahedral capsid of pseudo T=3 symmetry together with capsid proteins VP0 and VP1. The capsid is 300 Angstroms in diameter, composed of 60 copies of each capsid protein and enclosing the viral positive strand RNA genome. Capsid proteins interact with host alpha-V/beta-3 integrin heterodimer to provide virion attachment target cell. This attachment induces virion internalization predominantly through clathrin-mediated endocytosis. Binds packaging signals present in the viral RNA. Its function is as follows. Forms an icosahedral capsid of pseudo T=3 symmetry together with capsid proteins VP0 and VP3. The capsid is 300 Angstroms in diameter, composed of 60 copies of each capsid protein and enclosing the viral positive strand RNA genome. Capsid proteins interact with host alpha-V/beta-3 integrin heterodimer to provide virion attachment target cell. This attachment induces virion internalization predominantly through clathrin-mediated endocytosis. Binds packaging signals present in the viral RNA. In terms of biological role, is not a protease. Plays an essential role in the virus replication cycle by acting as a viroporin. Creates a pore in the host endoplasmic reticulum and as a consequence releases Ca2+ in the cytoplasm of infected cell. In turn, high levels of cytoplasmic calcium may trigger membrane trafficking and transport of viral ER-associated proteins to viroplasms, sites of viral genome replication. Functionally, induces and associates with structural rearrangements of intracellular membranes. Displays RNA-binding, nucleotide binding and NTPase activities. May play a role in virion morphogenesis and viral RNA encapsidation by interacting with the capsid protein VP3. Its function is as follows. Localizes the viral replication complex to the surface of membranous vesicles. It inhibits host cell endoplasmic reticulum-to-Golgi apparatus transport and causes the disassembly of the Golgi complex, possibly through GBF1 interaction. This would result in depletion of MHC, trail receptors and IFN receptors at the host cell surface. Plays an essential role in viral RNA replication by recruiting ACBD3 and PI4KB at the viral replication sites, thereby allowing the formation of the rearranged membranous structures where viral replication takes place. In terms of biological role, acts as a primer for viral RNA replication and remains covalently bound to viral genomic RNA. VPg is uridylylated prior to priming replication into VPg-pUpU. The VPg-pUpU is then used as primer on the genomic RNA poly(A) by the RNA-dependent RNA polymerase to replicate the viral genome. Following genome release from the infecting virion in the cytoplasm, the VPg-RNA linkage is probably removed by host TDP2. During the late stage of the replication cycle, host TDP2 is excluded from sites of viral RNA synthesis and encapsidation, allowing for the generation of progeny virions. Cysteine protease that generates mature viral proteins from the precursor polyprotein. In addition to its proteolytic activity, it binds to viral RNA, and thus influences viral genome replication. RNA and substrate bind cooperatively to the protease. Functionally, replicates the viral genomic RNA on the surface of intracellular membranes. Covalently attaches UMP to a tyrosine of VPg, which is used to prime RNA synthesis. The positive stranded RNA genome is first replicated at virus induced membranous vesicles, creating a dsRNA genomic replication form. This dsRNA is then used as template to synthesize positive stranded RNA genomes. ss(+)RNA genomes are either translated, replicated or encapsidated. In Human parechovirus 2 (strain Williamson) (HPeV-2), this protein is Genome polyprotein.